We begin with the raw amino-acid sequence, 898 residues long: Netrin receptor UNC5A (898 aa).

The first 25 residues, 1-25 (MAVRPGLWPVLLGIVLAAWLRGSGA), serve as a signal peptide directing secretion. At 26-361 (QQSATVANPV…TASCPEDVAL (336 aa)) the chain is on the extracellular side. Residues 44 to 141 (PHFLVEPEDV…SGTTKSQKAY (98 aa)) enclose the Ig-like domain. 3 disulfide bridges follow: cysteine 65–cysteine 126, cysteine 77–cysteine 124, and cysteine 170–cysteine 221. Residues asparagine 107 and asparagine 218 are each glycosylated (N-linked (GlcNAc...) asparagine). The Ig-like C2-type domain occupies 155 to 238 (PLAKEVSLEQ…RRRSTSAAVI (84 aa)). 2 TSP type-1 domains span residues 242-296 (NGGW…TLCP) and 298-350 (DGSW…DLCL). Residues tryptophan 245, tryptophan 248, and tryptophan 251 are each glycosylated (C-linked (Man) tryptophan). 3 cysteine pairs are disulfide-bonded: cysteine 254-cysteine 291, cysteine 258-cysteine 295, and cysteine 269-cysteine 281. 2 C-linked (Man) tryptophan glycosylation sites follow: tryptophan 301 and tryptophan 304. 3 disulfides stabilise this stretch: cysteine 310–cysteine 344, cysteine 314–cysteine 349, and cysteine 322–cysteine 334. N-linked (GlcNAc...) asparagine glycosylation is present at asparagine 343. The chain crosses the membrane as a helical span at residues 362–382 (YIGLVAVAVCLFLLLLALGLI). Residues 383–898 (YCRKKEGLDS…GLFTVSEAEC (516 aa)) are Cytoplasmic-facing. The ZU5 domain occupies 497–640 (NMAYGTFNFL…LGRFALVGEA (144 aa)). The segment at 661–679 (SLEYNIRVYCLHDTHDALK) is interaction with DCC. The 81-residue stretch at 817–897 (QKIIASLDPP…AGLFTVSEAE (81 aa)) folds into the Death domain.

This sequence belongs to the unc-5 family. Homodimer and homooligomer. Interacts with the cytoplasmic part of DCC. Interacts with MAGED1. Interacts with PRKCABP, possibly mediating some interaction with PKC. Interacts (via extracellular domain) with FLRT2 (via extracellular domain). Interacts (via extracellular domain) with FLRT3 (via extracellular domain). Phosphorylated on cytoplasmic tyrosine residues. Phosphorylated by PKC in vitro. Post-translationally, proteolytically cleaved by caspases during apoptosis. The cleavage does not take place when the receptor is associated with netrin ligand. Its cleavage by caspases is required to induce apoptosis. In terms of processing, the two extracellular TSRs of UNC5A contain WxxWxxWxxC motifs that can be C-mannosylated on all tryptophans. DPY19L1 preferentially mannosylates the first two tryptophans and DPY19L3 prefers the third. C-mannosylation by DPY19L1 is required for transport of UNC5A from the endoplasmic reticulum to the cell surface. In terms of tissue distribution, mainly expressed in regions of differentiating neurons. Expressed at early stages of neural tube development in the ventral spinal cord. In developing hindbrain, it colocalizes with a number of cranial motor neuron subpopulations from embryonic E11 to E14, while DCC is expressed by motor neurons at E12. Also expressed in non-neural structures, such as the basal plane of the hindbrain and midbrain, in the developing hypothalamus, thalamus and in the pallidum.

It is found in the cell membrane. The protein resides in the membrane raft. The protein localises to the cell projection. It localises to the neuron projection. Its function is as follows. Receptor for netrin required for axon guidance. Functions in the netrin signaling pathway and promotes neurite outgrowth in response to NTN1. Mediates axon repulsion of neuronal growth cones in the developing nervous system in response to netrin. Axon repulsion in growth cones may be mediated by its association with DCC that may trigger signaling for repulsion. It also acts as a dependence receptor required for apoptosis induction when not associated with netrin ligand. The sequence is that of Netrin receptor UNC5A (Unc5a) from Rattus norvegicus (Rat).